Reading from the N-terminus, the 413-residue chain is Gamma-glutamyl phosphate reductase (413 aa).

It belongs to the gamma-glutamyl phosphate reductase family.

It is found in the cytoplasm. The catalysed reaction is L-glutamate 5-semialdehyde + phosphate + NADP(+) = L-glutamyl 5-phosphate + NADPH + H(+). The protein operates within amino-acid biosynthesis; L-proline biosynthesis; L-glutamate 5-semialdehyde from L-glutamate: step 2/2. In terms of biological role, catalyzes the NADPH-dependent reduction of L-glutamate 5-phosphate into L-glutamate 5-semialdehyde and phosphate. The product spontaneously undergoes cyclization to form 1-pyrroline-5-carboxylate. This is Gamma-glutamyl phosphate reductase from Lactococcus lactis subsp. cremoris (strain MG1363).